A 961-amino-acid chain; its full sequence is RNA polymerase II subunit A C-terminal domain phosphatase (961 aa).

At M1 the chain carries N-acetylmethionine. Residues 178 to 344 (HRNRKLVLMV…SRESQTRKKV (167 aa)) form the FCP1 homology domain. The segment at 328–589 (DMNAPPGSRE…EEEDTDEDDH (262 aa)) is disordered. Residues 394-406 (DSPRPGKPDERDI) show a composition bias toward basic and acidic residues. S395 carries the phosphoserine modification. Positions 450–462 (LDFDLSSDSESSS) are enriched in acidic residues. The segment covering 463-475 (ESEGTKSSSSASD) has biased composition (low complexity). The span at 575 to 588 (SMEEEEEEDTDEDD) shows a compositional bias: acidic residues. The 100-residue stretch at 629 to 728 (LKSKVLADVA…DKVEEQLFPL (100 aa)) folds into the BRCT domain. Residues S674 and S740 each carry the phosphoserine modification. 2 disordered regions span residues 730-752 (DDHT…GVPP) and 780-949 (KLIR…ADEM). Position 780 is an N6-acetyllysine (K780). Residues 793–803 (SSSLPIRQEPS) show a composition bias toward polar residues. At S839 the chain carries Phosphoserine. The segment covering 850 to 859 (CKEDLESMDK) has biased composition (basic and acidic residues). Acidic residues-rich tracts occupy residues 860–873 (EVDD…DDSD) and 937–947 (NEDEGSSSEAD). Phosphoserine is present on residues S869 and S872.

As to quaternary structure, homodimer. Interacts with GTF2F1. Interacts with WDR77, SNRPB and SNRNP70. Post-translationally, phosphorylated. In the presence of TFIIF, the phosphorylated form has an increased CTD phosphatase activity. The phosphorylation is required for the physical interaction with GTF2F1. As to expression, ubiquitously expressed.

Its subcellular location is the nucleus. It localises to the cytoplasm. The protein resides in the cytoskeleton. It is found in the microtubule organizing center. The protein localises to the centrosome. Its subcellular location is the spindle pole. It localises to the midbody. The enzyme catalyses O-phospho-L-seryl-[protein] + H2O = L-seryl-[protein] + phosphate. It carries out the reaction O-phospho-L-threonyl-[protein] + H2O = L-threonyl-[protein] + phosphate. Functionally, processively dephosphorylates 'Ser-2' and 'Ser-5' of the heptad repeats YSPTSPS in the C-terminal domain of the largest RNA polymerase II subunit. This promotes the activity of RNA polymerase II. Plays a role in the exit from mitosis by dephosphorylating crucial mitotic substrates (USP44, CDC20 and WEE1) that are required for M-phase-promoting factor (MPF)/CDK1 inactivation. The protein is RNA polymerase II subunit A C-terminal domain phosphatase (CTDP1) of Homo sapiens (Human).